Reading from the N-terminus, the 379-residue chain is MSDQSFDAPVWHNGKALRKGYTTGSCATAAAKVAALMVLRQHLIHQVSIVTPSGVTLCLNVESPHIEGRQAIAAIRKDGGDDVDATHGMLIFARVTLNDSGEITLQGGEGVGTVTRKGIGLPVGSAAINRTPRHTIESVVREAIGPARGADIEIFAPEGEERAQKTYNARLGILGGISIIGTTGIVTPMSEESWKRSLSLELEIKRAAGLERVVLVPGNHGERFVREQMGIDTQVVVTMSNFVGYMIEEAVRLGYRHIVLIGHPGKLIKIAAGIFHTHSHIADARMETLVAHLALLGAPLELLTRVSDCDTTEAAMEHIEAYGFQHIYNHLAQRICMRVMQMLRFTKTPPTCDAIMFSFDNQILGSNRPIEEIVEEMQC.

The protein belongs to the CbiD family.

It catalyses the reaction Co-precorrin-5B + S-adenosyl-L-methionine = Co-precorrin-6A + S-adenosyl-L-homocysteine. It participates in cofactor biosynthesis; adenosylcobalamin biosynthesis; cob(II)yrinate a,c-diamide from sirohydrochlorin (anaerobic route): step 6/10. Its function is as follows. Catalyzes the methylation of C-1 in cobalt-precorrin-5B to form cobalt-precorrin-6A. This chain is Cobalt-precorrin-5B C(1)-methyltransferase, found in Citrobacter koseri (strain ATCC BAA-895 / CDC 4225-83 / SGSC4696).